The chain runs to 225 residues: Large ribosomal subunit protein eL15 (225 aa).

The disordered stretch occupies residues 159 to 180 (RPFRGLTSAGKKMRGLRKSRGL). The span at 169–180 (KKMRGLRKSRGL) shows a compositional bias: basic residues.

Belongs to the eukaryotic ribosomal protein eL15 family.

The protein is Large ribosomal subunit protein eL15 (rpl15e) of Aeropyrum pernix (strain ATCC 700893 / DSM 11879 / JCM 9820 / NBRC 100138 / K1).